A 69-amino-acid chain; its full sequence is Conotoxin Lt5.7 (69 aa).

Residues 1 to 19 (MLCLPVFIILLLLASPAAP) form the signal peptide. Residues 20–54 (KSLETRIQNDLIRAGLTDADLKTEKGFLSGLLNVA) constitute a propeptide that is removed on maturation.

It belongs to the conotoxin T superfamily. Post-translationally, contains 2 disulfide bonds that can be either 'C1-C3, C2-C4' or 'C1-C4, C2-C3', since these disulfide connectivities have been observed for conotoxins with cysteine framework V (for examples, see AC P0DQQ7 and AC P81755). Expressed by the venom duct.

The protein resides in the secreted. The chain is Conotoxin Lt5.7 from Conus litteratus (Lettered cone).